The chain runs to 205 residues: Beta-crystallin B2 (205 aa).

Alanine 2 bears the N-acetylalanine mark. The interval 2 to 16 (ASDHQTQAGKPQPLN) is N-terminal arm. 2 consecutive Beta/gamma crystallin 'Greek key' domains span residues 17–56 (PKII…LVQA) and 57–101 (GPWV…RPIK). The tract at residues 102–106 (VDSQE) is connecting peptide. Beta/gamma crystallin 'Greek key' domains lie at 107–148 (HKII…RVQS) and 149–191 (GTWV…RRIR). Residues 193–205 (MQWHQRGAFHPTN) are C-terminal arm.

This sequence belongs to the beta/gamma-crystallin family. In terms of assembly, homo/heterodimer, or complexes of higher-order. The structure of beta-crystallin oligomers seems to be stabilized through interactions between the N-terminal arms.

In terms of biological role, crystallins are the dominant structural components of the vertebrate eye lens. The protein is Beta-crystallin B2 (CRYBB2) of Oryctolagus cuniculus (Rabbit).